The following is a 613-amino-acid chain: Proline--tRNA ligase (613 aa).

It belongs to the class-II aminoacyl-tRNA synthetase family. ProS type 1 subfamily. Homodimer.

Its subcellular location is the cytoplasm. It carries out the reaction tRNA(Pro) + L-proline + ATP = L-prolyl-tRNA(Pro) + AMP + diphosphate. In terms of biological role, catalyzes the attachment of proline to tRNA(Pro) in a two-step reaction: proline is first activated by ATP to form Pro-AMP and then transferred to the acceptor end of tRNA(Pro). As ProRS can inadvertently accommodate and process non-cognate amino acids such as alanine and cysteine, to avoid such errors it has two additional distinct editing activities against alanine. One activity is designated as 'pretransfer' editing and involves the tRNA(Pro)-independent hydrolysis of activated Ala-AMP. The other activity is designated 'posttransfer' editing and involves deacylation of mischarged Ala-tRNA(Pro). The misacylated Cys-tRNA(Pro) is not edited by ProRS. The sequence is that of Proline--tRNA ligase from Tropheryma whipplei (strain Twist) (Whipple's bacillus).